Reading from the N-terminus, the 350-residue chain is Cobalt-precorrin-5B C(1)-methyltransferase (350 aa).

This sequence belongs to the CbiD family.

It carries out the reaction Co-precorrin-5B + S-adenosyl-L-methionine = Co-precorrin-6A + S-adenosyl-L-homocysteine. It functions in the pathway cofactor biosynthesis; adenosylcobalamin biosynthesis; cob(II)yrinate a,c-diamide from sirohydrochlorin (anaerobic route): step 6/10. Functionally, catalyzes the methylation of C-1 in cobalt-precorrin-5B to form cobalt-precorrin-6A. In Sulfurisphaera tokodaii (strain DSM 16993 / JCM 10545 / NBRC 100140 / 7) (Sulfolobus tokodaii), this protein is Cobalt-precorrin-5B C(1)-methyltransferase.